A 346-amino-acid chain; its full sequence is RNA polymerase II holoenzyme cyclin-like subunit (346 aa).

One can recognise a Cyclin N-terminal domain in the interval 59–158 (NLLIKLGRRL…EMDSYLFLHH (100 aa)).

Belongs to the cyclin family. Cyclin C subfamily. Component of the SRB8-11 complex, a regulatory module of the Mediator complex.

The protein resides in the nucleus. In terms of biological role, component of the SRB8-11 complex. The SRB8-11 complex is a regulatory module of the Mediator complex which is itself involved in regulation of basal and activated RNA polymerase II-dependent transcription. The SRB8-11 complex may be involved in the transcriptional repression of a subset of genes regulated by Mediator. It may inhibit the association of the Mediator complex with RNA polymerase II to form the holoenzyme complex. The SRB8-11 complex phosphorylates the C-terminal domain (CTD) of the largest subunit of RNA polymerase II. The chain is RNA polymerase II holoenzyme cyclin-like subunit (SSN8) from Scheffersomyces stipitis (strain ATCC 58785 / CBS 6054 / NBRC 10063 / NRRL Y-11545) (Yeast).